The chain runs to 141 residues: Large ribosomal subunit protein uL11 (141 aa).

This sequence belongs to the universal ribosomal protein uL11 family. Part of the ribosomal stalk of the 50S ribosomal subunit. Interacts with L10 and the large rRNA to form the base of the stalk. L10 forms an elongated spine to which L12 dimers bind in a sequential fashion forming a multimeric L10(L12)X complex. In terms of processing, one or more lysine residues are methylated.

Functionally, forms part of the ribosomal stalk which helps the ribosome interact with GTP-bound translation factors. The sequence is that of Large ribosomal subunit protein uL11 from Sulfurimonas denitrificans (strain ATCC 33889 / DSM 1251) (Thiomicrospira denitrificans (strain ATCC 33889 / DSM 1251)).